An 84-amino-acid chain; its full sequence is Succinate dehydrogenase membrane anchor subunit (84 aa).

The Mitochondrial matrix portion of the chain corresponds to 1–3; the sequence is MIT. Residues 4–24 form a helical membrane-spanning segment; that stretch reads FQWLIVRVVALFISLTILIDI. The Mitochondrial intermembrane portion of the chain corresponds to 25-31; the sequence is EMFVVML. Residues 32–52 traverse the membrane as a helical segment; the sequence is SFLIIHISIGLKAIIHDYIHF. His37 provides a ligand contact to heme. Tyr49 provides a ligand contact to a ubiquinone. The Mitochondrial matrix portion of the chain corresponds to 53 to 58; it reads QKIKLM. Residues 59-81 traverse the membrane as a helical segment; the sequence is LLILLRVSAIEISRSFRTFYIII. Residues 82-84 lie on the Mitochondrial intermembrane side of the membrane; sequence KNT.

As to quaternary structure, part of an enzyme complex containing four subunits: a flavoprotein, an iron-sulfur protein, plus two membrane-anchoring proteins. Heme is required as a cofactor.

The protein resides in the mitochondrion inner membrane. It participates in carbohydrate metabolism; tricarboxylic acid cycle. Functionally, membrane-anchoring subunit of succinate dehydrogenase (SDH). The chain is Succinate dehydrogenase membrane anchor subunit (SDH4) from Chondrus crispus (Carrageen Irish moss).